Consider the following 314-residue polypeptide: Ribose-phosphate pyrophosphokinase (314 aa).

ATP-binding positions include 37-39 (DGE) and 96-97 (RQ). Mg(2+) is bound by residues His-131 and Asp-170. The active site involves Lys-194. Residues Arg-196, Asp-220, and 224 to 228 (DTGGT) each bind D-ribose 5-phosphate.

The protein belongs to the ribose-phosphate pyrophosphokinase family. Class I subfamily. As to quaternary structure, homohexamer. Mg(2+) is required as a cofactor.

The protein localises to the cytoplasm. It catalyses the reaction D-ribose 5-phosphate + ATP = 5-phospho-alpha-D-ribose 1-diphosphate + AMP + H(+). It functions in the pathway metabolic intermediate biosynthesis; 5-phospho-alpha-D-ribose 1-diphosphate biosynthesis; 5-phospho-alpha-D-ribose 1-diphosphate from D-ribose 5-phosphate (route I): step 1/1. Involved in the biosynthesis of the central metabolite phospho-alpha-D-ribosyl-1-pyrophosphate (PRPP) via the transfer of pyrophosphoryl group from ATP to 1-hydroxyl of ribose-5-phosphate (Rib-5-P). This Vibrio parahaemolyticus serotype O3:K6 (strain RIMD 2210633) protein is Ribose-phosphate pyrophosphokinase.